We begin with the raw amino-acid sequence, 302 residues long: MTLKIGTRGSKLATTQAGTIRDQLKYFGRDAELHIVTTPGDVNMSPVERIGVGVFTQALRDVLHAGECDVAVHSMKDLPTAADPRFHLVVPTRADSREALIARDGLTLAELPEGAKVGTSAPRRISQLKAIRPDLEILPLRGNIDTRMGKVTSGELDAVMLAYAGLTRVGMQDRATEVFDADIIMPAPAQGALAIECRADDTETVRALNMLMHADTFVSAVAERTVLNRLEAGCTAPVAAHATLDGYSGDTMTLTAGVYALDGSDQLVFSAEGDGARPEELGELVAQQLIDAGAANLLGDRS.

An S-(dipyrrolylmethanemethyl)cysteine modification is found at C234.

Belongs to the HMBS family. As to quaternary structure, monomer. Requires dipyrromethane as cofactor.

The enzyme catalyses 4 porphobilinogen + H2O = hydroxymethylbilane + 4 NH4(+). It participates in porphyrin-containing compound metabolism; protoporphyrin-IX biosynthesis; coproporphyrinogen-III from 5-aminolevulinate: step 2/4. In terms of biological role, tetrapolymerization of the monopyrrole PBG into the hydroxymethylbilane pre-uroporphyrinogen in several discrete steps. The sequence is that of Porphobilinogen deaminase from Corynebacterium glutamicum (strain R).